The chain runs to 252 residues: Type III pantothenate kinase (252 aa).

6 to 13 provides a ligand contact to ATP; the sequence is DVGNTHTT. Substrate is bound at residue 104 to 107; sequence GADR. Catalysis depends on aspartate 106, which acts as the Proton acceptor. Position 126 (aspartate 126) interacts with K(+). Residue threonine 129 coordinates ATP. Threonine 180 serves as a coordination point for substrate.

It belongs to the type III pantothenate kinase family. In terms of assembly, homodimer. It depends on NH4(+) as a cofactor. The cofactor is K(+).

Its subcellular location is the cytoplasm. The enzyme catalyses (R)-pantothenate + ATP = (R)-4'-phosphopantothenate + ADP + H(+). Its pathway is cofactor biosynthesis; coenzyme A biosynthesis; CoA from (R)-pantothenate: step 1/5. Catalyzes the phosphorylation of pantothenate (Pan), the first step in CoA biosynthesis. The polypeptide is Type III pantothenate kinase (Fervidobacterium nodosum (strain ATCC 35602 / DSM 5306 / Rt17-B1)).